We begin with the raw amino-acid sequence, 645 residues long: Protein disulfide-isomerase A4 (645 aa).

Residues 1-20 (MRPRKAFLLLLLLGLVQLLA) form the signal peptide. Thioredoxin domains follow at residues 21-169 (VAGA…EVSQ) and 158-301 (EEIV…EFLK). Positions 24-58 (AEGPDEDSSNRENAIEDEEEEEEEDDDEEEDDLEV) are disordered. Over residues 38–58 (IEDEEEEEEEDDDEEEDDLEV) the composition is skewed to acidic residues. Positions 91–94 (CGHC) match the CXXC motif. 2 disulfides stabilise this stretch: Cys-91-Cys-94 and Cys-206-Cys-209. At Lys-366 the chain carries N6-acetyllysine. In terms of domain architecture, Thioredoxin 3 spans 505-636 (FKKGKLKPVI…LSKFIEEHAT (132 aa)). A CXXC motif is present at residues 555 to 558 (CGHC). Cysteines 555 and 558 form a disulfide. A Prevents secretion from ER motif is present at residues 642–645 (KEEL).

The protein belongs to the protein disulfide isomerase family. As to quaternary structure, part of a large chaperone multiprotein complex comprising DNAJB11, HSP90B1, HSPA5, HYOU, PDIA2, PDIA4, PDIA6, PPIB, SDF2L1, UGGT1 and very small amounts of ERP29, but not, or at very low levels, CALR nor CANX. Component of a complex containing at least CRELD2, MANF, MATN3 and PDIA4. (Microbial infection) Interacts with Human astrovirus-1 and Human astrovirus-8 spike protein VP25; this interaction seems to facilitate the uncoating during virus entry into the cell. Does not interact with Human astrovirus-2 spike protein VP25.

Its subcellular location is the endoplasmic reticulum lumen. It localises to the melanosome. It carries out the reaction Catalyzes the rearrangement of -S-S- bonds in proteins.. This chain is Protein disulfide-isomerase A4 (PDIA4), found in Homo sapiens (Human).